We begin with the raw amino-acid sequence, 176 residues long: Large ribosomal subunit protein uL6 (176 aa).

It belongs to the universal ribosomal protein uL6 family. In terms of assembly, part of the 50S ribosomal subunit.

Its function is as follows. This protein binds to the 23S rRNA, and is important in its secondary structure. It is located near the subunit interface in the base of the L7/L12 stalk, and near the tRNA binding site of the peptidyltransferase center. The protein is Large ribosomal subunit protein uL6 of Burkholderia ambifaria (strain ATCC BAA-244 / DSM 16087 / CCUG 44356 / LMG 19182 / AMMD) (Burkholderia cepacia (strain AMMD)).